Here is a 458-residue protein sequence, read N- to C-terminus: Argininosuccinate lyase (458 aa).

It belongs to the lyase 1 family. Argininosuccinate lyase subfamily.

Its subcellular location is the cytoplasm. It carries out the reaction 2-(N(omega)-L-arginino)succinate = fumarate + L-arginine. The protein operates within amino-acid biosynthesis; L-arginine biosynthesis; L-arginine from L-ornithine and carbamoyl phosphate: step 3/3. The polypeptide is Argininosuccinate lyase (Geobacter sulfurreducens (strain ATCC 51573 / DSM 12127 / PCA)).